The primary structure comprises 249 residues: 5'-nucleotidase SurE (249 aa).

A divalent metal cation-binding residues include aspartate 8, aspartate 9, serine 39, and asparagine 91.

This sequence belongs to the SurE nucleotidase family. A divalent metal cation is required as a cofactor.

Its subcellular location is the cytoplasm. It carries out the reaction a ribonucleoside 5'-phosphate + H2O = a ribonucleoside + phosphate. Functionally, nucleotidase that shows phosphatase activity on nucleoside 5'-monophosphates. In Pseudomonas aeruginosa (strain LESB58), this protein is 5'-nucleotidase SurE.